Here is a 143-residue protein sequence, read N- to C-terminus: MNEQKTNDLILQTATKLVSFIILLFSFYLFLSGHNAPGGGFVGGLITSSSIVLLLLAYDLKTVRSLLPVNFIYVAGAGLLLAVLTGVGSFVFGAPFLTHTFGYFQLPILGKTELATATIFDLGVYLVVVGITMTIIQTIGEEE.

The next 4 helical transmembrane spans lie at 9 to 31, 36 to 58, 71 to 93, and 117 to 139; these read LILQ…YLFL, APGG…LLAY, FIYV…FVFG, and ATIF…IQTI.

It belongs to the CPA3 antiporters (TC 2.A.63) subunit B family. In terms of assembly, forms a heterooligomeric complex that consists of seven subunits: MrpA, MrpB, MrpC, MrpD, MrpE, MrpF and MrpG.

The protein localises to the cell membrane. Its function is as follows. Mrp complex is a Na(+)/H(+) antiporter that is considered to be the major Na(+) excretion system in B.subtilis. Has a major role in Na(+) resistance and a minor role in Na(+)- and K(+)-dependent pH homeostasis as compared to TetB. MrpA may be the actual Na(+)/H(+) antiporter, although the six other Mrp proteins are all required for Na(+)/H(+) antiport activity and Na(+) resistance. MrpA is required for initiation of sporulation when external Na(+) concentration increases. Also transports Li(+) but not K(+), Ca(2+) or Mg(2+). In Bacillus subtilis (strain 168), this protein is Na(+)/H(+) antiporter subunit B (mrpB).